The primary structure comprises 62 residues: Large ribosomal subunit protein bL28 (62 aa).

The segment at 1–28 (MARVCTITGRKARSGNSRSHAMNATKRK) is disordered.

It belongs to the bacterial ribosomal protein bL28 family.

The sequence is that of Large ribosomal subunit protein bL28 from Bacillus anthracis (strain CDC 684 / NRRL 3495).